The chain runs to 405 residues: Tyrosine-protein phosphatase non-receptor type eak-6 (405 aa).

The Tyrosine-protein phosphatase domain maps to 30–309 (INQRINIIAD…SFIYDIIIKY (280 aa)). Cys248 functions as the Phosphocysteine intermediate in the catalytic mechanism.

Belongs to the protein-tyrosine phosphatase family. Expressed in the 2 embryonic head hypodermal cells XXXL/R.

It localises to the cytoplasm. Its subcellular location is the cell membrane. It catalyses the reaction O-phospho-L-tyrosyl-[protein] + H2O = L-tyrosyl-[protein] + phosphate. Putative phosphatase which, together with eak-4 and sdf-9, negatively regulates dauer larva formation downstream of insulin-like receptor daf-2 and in parallel of age-1, pdk-1 and akt-1. The polypeptide is Tyrosine-protein phosphatase non-receptor type eak-6 (Caenorhabditis elegans).